A 526-amino-acid polypeptide reads, in one-letter code: Probable metalloreductase AIM14 (526 aa).

Helical transmembrane passes span 17–37 (IPYG…LGVL), 60–80 (LYLV…LLPF), 96–113 (RLGR…LLNL), 138–158 (CIII…ALGE), 172–192 (LAGV…IGPM), 199–219 (AFYV…AFHA), and 221–241 (PSVT…QGFA). One can recognise a Ferric oxidoreductase domain in the interval 97–214 (LGRLSYALLP…NLTGISFIFV (118 aa)). Residues 238–370 (QGFAKFYYAK…GGSGISFGLP (133 aa)) form the FAD-binding FR-type domain.

This sequence belongs to the ferric reductase (FRE) family. AIM14 subfamily.

It is found in the membrane. Functionally, probable cell surface metalloreductase. May be involved in iron or copper homeostasis. This chain is Probable metalloreductase AIM14 (AIM14), found in Zygosaccharomyces rouxii (strain ATCC 2623 / CBS 732 / NBRC 1130 / NCYC 568 / NRRL Y-229).